Consider the following 978-residue polypeptide: Probable serine/threonine-protein kinase PLK (978 aa).

Positions I19 to K36 are enriched in low complexity. Disordered stretches follow at residues I19–H66 and Q121–Q143. Polar residues predominate over residues S37–P53. Residues S54 to S64 show a composition bias toward low complexity. One can recognise a Protein kinase domain in the interval Y163–F416. Residues L169–C177 and K192 contribute to the ATP site. The Proton acceptor role is filled by D286. Disordered regions lie at residues G463–L554 and E601–T638. Composition is skewed to low complexity over residues H473–Q492 and I500–N549. 2 coiled-coil regions span residues K497–S555 and I592–N630. Residues Y696–N780 enclose the POLO box 1 domain. The segment at N798–S819 is disordered. The POLO box 2 domain occupies Y826 to Y904. A disordered region spans residues P908–Q978. Positions Q913–Q978 are enriched in low complexity.

This sequence belongs to the protein kinase superfamily. Ser/Thr protein kinase family. CDC5/Polo subfamily.

It catalyses the reaction L-seryl-[protein] + ATP = O-phospho-L-seryl-[protein] + ADP + H(+). The catalysed reaction is L-threonyl-[protein] + ATP = O-phospho-L-threonyl-[protein] + ADP + H(+). The protein is Probable serine/threonine-protein kinase PLK (PLK) of Dictyostelium discoideum (Social amoeba).